Reading from the N-terminus, the 346-residue chain is LRP2-binding protein (346 aa).

One copy of the TPR repeat lies at 58-91 (AMAYFLRGQLYFEEGWYEEALAQFEEIQEKDHQA). Sel1-like repeat units lie at residues 92–124 (IYQL…DSSC), 132–167 (FAAA…DNGN), 172–205 (VKAQ…GNGN), 206–241 (LESQ…ERGN), 242–276 (VYAQ…EVHD), and 296–331 (AMAS…RLNP).

As to quaternary structure, interacts with LRP2.

Its subcellular location is the cytoplasm. Functionally, may act as an adapter that regulates LRP2 function. The protein is LRP2-binding protein (Lrp2bp) of Rattus norvegicus (Rat).